A 489-amino-acid polypeptide reads, in one-letter code: Glutamate--tRNA ligase (489 aa).

The 'HIGH' region signature appears at 12–22 (PSPTGIPHVGM). The short motif at 256-260 (KLSKR) is the 'KMSKS' region element. Lysine 259 contributes to the ATP binding site.

This sequence belongs to the class-I aminoacyl-tRNA synthetase family. Glutamate--tRNA ligase type 1 subfamily. Monomer.

Its subcellular location is the cytoplasm. It carries out the reaction tRNA(Glu) + L-glutamate + ATP = L-glutamyl-tRNA(Glu) + AMP + diphosphate. Catalyzes the attachment of glutamate to tRNA(Glu) in a two-step reaction: glutamate is first activated by ATP to form Glu-AMP and then transferred to the acceptor end of tRNA(Glu). The polypeptide is Glutamate--tRNA ligase (Mycobacterium ulcerans (strain Agy99)).